Reading from the N-terminus, the 882-residue chain is Dual specificity tyrosine-phosphorylation-regulated kinase mbk-1 (882 aa).

Positions 1-42 (MNTADVPDNLQSWGQQPSSSYSNTQQHSQMTNLPPINHNNLC) are enriched in polar residues. 4 disordered regions span residues 1–45 (MNTA…CDTE), 62–81 (QKQQ…AQRF), 212–239 (KQVR…ASLT), and 255–308 (NHYQ…NGYD). The segment covering 64–79 (QQKQQEQQHIQQQNAQ) has biased composition (low complexity). A compositionally biased stretch (basic and acidic residues) spans 220 to 231 (KSQDAGKPKGSK). Low complexity predominate over residues 290-308 (QQQQRQKSSRGGPYNNGYD). The Protein kinase domain maps to 328-649 (ILSDTPVGKG…PYYVVRHPFL (322 aa)). ATP contacts are provided by residues 334 to 342 (VGKGSFGQV) and K357. The Proton acceptor role is filled by D456. Disordered regions lie at residues 742-761 (HNPN…QYQQ) and 789-882 (QQQQ…NNKL). Low complexity-rich tracts occupy residues 747–761 (QYSQ…QYQQ) and 789–810 (QQQQ…QHLQ). Basic and acidic residues predominate over residues 816-827 (RQQDQNEWRNQF). A compositionally biased stretch (polar residues) spans 843–869 (SVSNQISRNQFNPQQVSMTHGNVNANN).

Belongs to the protein kinase superfamily. CMGC Ser/Thr protein kinase family. MNB/DYRK subfamily. Requires Mg(2+) as cofactor. As to expression, expressed in all somatic cells.

It localises to the nucleus. The enzyme catalyses L-seryl-[protein] + ATP = O-phospho-L-seryl-[protein] + ADP + H(+). It catalyses the reaction L-threonyl-[protein] + ATP = O-phospho-L-threonyl-[protein] + ADP + H(+). It carries out the reaction L-tyrosyl-[protein] + ATP = O-phospho-L-tyrosyl-[protein] + ADP + H(+). In terms of biological role, possible role in the function of olfactory neurons. This Caenorhabditis elegans protein is Dual specificity tyrosine-phosphorylation-regulated kinase mbk-1.